Here is a 236-residue protein sequence, read N- to C-terminus: Small ribosomal subunit protein uS2c (236 aa).

The protein belongs to the universal ribosomal protein uS2 family.

Its subcellular location is the plastid. The protein localises to the chloroplast. The protein is Small ribosomal subunit protein uS2c (rps2) of Liriodendron tulipifera (Tuliptree).